A 262-amino-acid polypeptide reads, in one-letter code: WUSCHEL-related homeobox 11 (262 aa).

The segment covering 1–11 has biased composition (basic and acidic residues); sequence MDGGHSPDRHA. Disordered regions lie at residues 1-21 and 79-115; these read MDGGHSPDRHAAAAAGEPVRS and RRRQRQLQAQAQAAAAAASSGSPPTASSGGLAPGHAG. The segment at residues 18–82 is a DNA-binding region (homeobox); sequence PVRSRWTPKP…NRRSRSRRRQ (65 aa). Positions 84-112 are enriched in low complexity; sequence QLQAQAQAAAAAASSGSPPTASSGGLAPG.

This sequence belongs to the WUS homeobox family. As to quaternary structure, interacts with ERF3.

It is found in the nucleus. Its function is as follows. Transcription factor which may be involved in developmental processes. Promotes the development of crown roots (both initiation and elongation), main components of the fibrous root system, by regulating the expression of genes required for crown root development and hormone-responsive genes involved in cytokinin (e.g. RR1, RR2, RR3 and RR4) and auxin (e.g. IAA5, IAA11, IAA23 and IAA31) signaling. The chain is WUSCHEL-related homeobox 11 from Oryza sativa subsp. indica (Rice).